The following is a 444-amino-acid chain: Exodeoxyribonuclease 7 large subunit (444 aa).

This sequence belongs to the XseA family. In terms of assembly, heterooligomer composed of large and small subunits.

It localises to the cytoplasm. It carries out the reaction Exonucleolytic cleavage in either 5'- to 3'- or 3'- to 5'-direction to yield nucleoside 5'-phosphates.. Functionally, bidirectionally degrades single-stranded DNA into large acid-insoluble oligonucleotides, which are then degraded further into small acid-soluble oligonucleotides. The sequence is that of Exodeoxyribonuclease 7 large subunit from Xylella fastidiosa (strain M23).